We begin with the raw amino-acid sequence, 207 residues long: Large ribosomal subunit protein uL4 (207 aa).

The disordered stretch occupies residues 48–75 (THAVKNRSAVSGGGRKPWKQKGTGRARA).

The protein belongs to the universal ribosomal protein uL4 family. Part of the 50S ribosomal subunit.

Its function is as follows. One of the primary rRNA binding proteins, this protein initially binds near the 5'-end of the 23S rRNA. It is important during the early stages of 50S assembly. It makes multiple contacts with different domains of the 23S rRNA in the assembled 50S subunit and ribosome. In terms of biological role, forms part of the polypeptide exit tunnel. This is Large ribosomal subunit protein uL4 from Leuconostoc citreum (strain KM20).